A 434-amino-acid chain; its full sequence is Eukaryotic translation initiation factor 3 subunit E-1 (434 aa).

The PCI domain occupies 219–392 (FFNHPKGRDL…GHVVMGTQPL (174 aa)).

The protein belongs to the eIF-3 subunit E family. Component of the eukaryotic translation initiation factor 3 (eIF-3) complex. The eIF-3 complex interacts with pix. Interacts with mxt.

It is found in the cytoplasm. Its function is as follows. Component of the eukaryotic translation initiation factor 3 (eIF-3) complex, which is involved in protein synthesis of a specialized repertoire of mRNAs and, together with other initiation factors, stimulates binding of mRNA and methionyl-tRNAi to the 40S ribosome. The eIF-3 complex specifically targets and initiates translation of a subset of mRNAs involved in cell proliferation. The protein is Eukaryotic translation initiation factor 3 subunit E-1 (eIF3-S6-1) of Drosophila willistoni (Fruit fly).